The chain runs to 359 residues: UDP-N-acetylglucosamine--N-acetylmuramyl-(pentapeptide) pyrophosphoryl-undecaprenol N-acetylglucosamine transferase (359 aa).

UDP-N-acetyl-alpha-D-glucosamine is bound by residues 15–17, asparagine 127, arginine 166, serine 191, isoleucine 245, 264–269, and glutamine 290; these read TGG and ALTVSE.

This sequence belongs to the glycosyltransferase 28 family. MurG subfamily.

It localises to the cell inner membrane. The catalysed reaction is di-trans,octa-cis-undecaprenyl diphospho-N-acetyl-alpha-D-muramoyl-L-alanyl-D-glutamyl-meso-2,6-diaminopimeloyl-D-alanyl-D-alanine + UDP-N-acetyl-alpha-D-glucosamine = di-trans,octa-cis-undecaprenyl diphospho-[N-acetyl-alpha-D-glucosaminyl-(1-&gt;4)]-N-acetyl-alpha-D-muramoyl-L-alanyl-D-glutamyl-meso-2,6-diaminopimeloyl-D-alanyl-D-alanine + UDP + H(+). The protein operates within cell wall biogenesis; peptidoglycan biosynthesis. Its function is as follows. Cell wall formation. Catalyzes the transfer of a GlcNAc subunit on undecaprenyl-pyrophosphoryl-MurNAc-pentapeptide (lipid intermediate I) to form undecaprenyl-pyrophosphoryl-MurNAc-(pentapeptide)GlcNAc (lipid intermediate II). This is UDP-N-acetylglucosamine--N-acetylmuramyl-(pentapeptide) pyrophosphoryl-undecaprenol N-acetylglucosamine transferase from Pseudomonas putida (strain ATCC 700007 / DSM 6899 / JCM 31910 / BCRC 17059 / LMG 24140 / F1).